Here is a 95-residue protein sequence, read N- to C-terminus: Beta-defensin 132 (95 aa).

The N-terminal stretch at 1 to 22 (MKFLLLVLAALRFLTQVIPASA) is a signal peptide. Intrachain disulfides connect Cys-27-Cys-55, Cys-35-Cys-49, and Cys-39-Cys-56. The interval 72–95 (GNHWQSRRRNTQRKDKKQQTTVTS) is disordered. Residues 76 to 87 (QSRRRNTQRKDK) show a composition bias toward basic residues.

It belongs to the beta-defensin family.

It localises to the secreted. Has antibacterial activity. In Pongo pygmaeus (Bornean orangutan), this protein is Beta-defensin 132 (DEFB132).